A 963-amino-acid polypeptide reads, in one-letter code: Integrator complex subunit 4 (963 aa).

Lysine 26 bears the N6-acetyllysine mark. HEAT repeat units lie at residues alanine 66–phenylalanine 105, glutamine 145–serine 183, glycine 190–lysine 228, leucine 229–tyrosine 263, isoleucine 277–serine 313, asparagine 369–serine 405, proline 406–leucine 444, and glutamate 446–leucine 484. A Glycyl lysine isopeptide (Lys-Gly) (interchain with G-Cter in SUMO1); alternate cross-link involves residue lysine 791. Residue lysine 791 forms a Glycyl lysine isopeptide (Lys-Gly) (interchain with G-Cter in SUMO2); alternate linkage.

Belongs to the Integrator subunit 4 family. In terms of assembly, component of the Integrator complex, composed of core subunits INTS1, INTS2, INTS3, INTS4, INTS5, INTS6, INTS7, INTS8, INTS9/RC74, INTS10, INTS11/CPSF3L, INTS12, INTS13, INTS14 and INTS15. The core complex associates with protein phosphatase 2A subunits PPP2CA and PPP2R1A, to form the Integrator-PP2A (INTAC) complex. INTS4 is part of the RNA endonuclease subcomplex, composed of INTS4, INTS9, INTS11 and inositol hexakisphosphate (InsP6). Interacts with BRAT1; interaction is required for the assembly of the RNA endonuclease subcomplex.

The protein localises to the nucleus. It is found in the cytoplasm. In terms of biological role, component of the integrator complex, a multiprotein complex that terminates RNA polymerase II (Pol II) transcription in the promoter-proximal region of genes. The integrator complex provides a quality checkpoint during transcription elongation by driving premature transcription termination of transcripts that are unfavorably configured for transcriptional elongation: the complex terminates transcription by (1) catalyzing dephosphorylation of the C-terminal domain (CTD) of Pol II subunit POLR2A/RPB1 and SUPT5H/SPT5, (2) degrading the exiting nascent RNA transcript via endonuclease activity and (3) promoting the release of Pol II from bound DNA. The integrator complex is also involved in terminating the synthesis of non-coding Pol II transcripts, such as enhancer RNAs (eRNAs), small nuclear RNAs (snRNAs), telomerase RNAs and long non-coding RNAs (lncRNAs). Within the integrator complex, INTS4 acts as an scaffold that links INTS9 and INTS11. Mediates recruitment of cytoplasmic dynein to the nuclear envelope, probably as component of the integrator complex. This chain is Integrator complex subunit 4, found in Homo sapiens (Human).